The chain runs to 662 residues: Chaperone protein dnaK1 (662 aa).

Thr198 carries the phosphothreonine; by autocatalysis modification. The interval 630–662 (DWDDDPWAAPSGPPRGRSLNRRDRDPWDDDFYR) is disordered. Basic and acidic residues predominate over residues 649–662 (NRRDRDPWDDDFYR).

It belongs to the heat shock protein 70 family.

In terms of biological role, acts as a chaperone. The chain is Chaperone protein dnaK1 (dnaK1) from Parasynechococcus marenigrum (strain WH8102).